Consider the following 189-residue polypeptide: Phosphoheptose isomerase (189 aa).

The region spanning 34-189 (AVETLKNGNK…CQIIDNELSH (156 aa)) is the SIS domain. 49–51 (NGG) is a substrate binding site. Residues His58 and Glu62 each contribute to the Zn(2+) site. Residues Glu62, 91–92 (ND), 117–119 (STS), Ser122, and Gln169 each bind substrate. Zn(2+)-binding residues include Gln169 and His177.

This sequence belongs to the SIS family. GmhA subfamily. As to quaternary structure, homotetramer. The cofactor is Zn(2+).

The protein localises to the cytoplasm. The enzyme catalyses 2 D-sedoheptulose 7-phosphate = D-glycero-alpha-D-manno-heptose 7-phosphate + D-glycero-beta-D-manno-heptose 7-phosphate. It functions in the pathway carbohydrate biosynthesis; D-glycero-D-manno-heptose 7-phosphate biosynthesis; D-glycero-alpha-D-manno-heptose 7-phosphate and D-glycero-beta-D-manno-heptose 7-phosphate from sedoheptulose 7-phosphate: step 1/1. Functionally, catalyzes the isomerization of sedoheptulose 7-phosphate in D-glycero-D-manno-heptose 7-phosphate. The polypeptide is Phosphoheptose isomerase (Aliarcobacter butzleri (strain RM4018) (Arcobacter butzleri)).